Here is a 92-residue protein sequence, read N- to C-terminus: Probable K(+)/H(+) antiporter subunit F (92 aa).

3 helical membrane-spanning segments follow: residues 4–24 (AVVWSVLVAQTMLALAMAFAL), 36–56 (RILGLDTLYINAMLMLITFGI), and 62–82 (VYFETALIIAVIGFASSIALA).

It belongs to the CPA3 antiporters (TC 2.A.63) subunit F family. May form a hetero-oligomeric complex that consists of six subunits: PhaAB, PhaC, PhaD, PhaE, PhaF and PhaG.

It localises to the cell membrane. Part of a K(+) efflux system which is required for the adaptation of R.meliloti to alkaline pH as well as for the infection process during symbiotic nodule development. This Rhizobium meliloti (strain 1021) (Ensifer meliloti) protein is Probable K(+)/H(+) antiporter subunit F (phaF).